A 459-amino-acid polypeptide reads, in one-letter code: MASLIGGSAIQHLAQDIDTNKINHKAKANGPNLAPKSRALDMVSKLEPSRGPVHEHWWDLTSPQLASMLEEAGYPVGRQLEILLFYNHTIPEADSSRNWQSLLPVTVVPLEYSWKWDTACESPEVRLTIEAFGDLSGTRADPLNQAAAIELLHRTKGVLPDLNQTWINHFCSTLFDEDKDKYMEEAQSGTGMRLQSTMLVAFEFGRTSTSTKTYLTPRRLGQQGFARLPEYMPAIQALGPSRALDTLMDFLHTSPEGVELTPFGLSFDNVEPTSSRLKFYFASPNTSYNSLREVLTLGCRISKANFNIEEKIRTIHSLAKALMVAPDNLPDDEHISARAQPQSLSSASDPVTSDIVKERTSLLAGYQYYFDIAPGADLPDIRFYAPIRKELINDRGVAAAVTDWMKAQGRGKFCDNYVRMLEGMAGERGLSKCHGLHSFIGCLIRRDGELDVTSYLLPG.

Residues valine 107–valine 108 and glutamate 111 each bind L-tryptophan. Positions 126, 276, 278, 280, and 384 each coordinate substrate.

This sequence belongs to the tryptophan dimethylallyltransferase family.

The catalysed reaction is quinolinone B + dimethylallyl diphosphate = peniprequinolone + diphosphate. It participates in secondary metabolite biosynthesis. It functions in the pathway alkaloid biosynthesis. Its pathway is mycotoxin biosynthesis. Its function is as follows. Prenyltransferase; part of the gene cluster that mediates the biosynthesis of penigequinolones, potent insecticidal alkaloids that contain a highly modified 10-carbon prenyl group. The first stage is catalyzed by the nonribosomal peptide synthetase penN that condenses anthranilic acid and O-methyl-L-tyrosine to produce 4'-methoxycyclopeptin. 4'-methoxycyclopeptin is then converted to 4'-methoxydehydrocyclopeptin by the ketoglutarate-dependent dioxygenase penM through dehydrogenation to form a double bond between C-alpha and C-beta of the O-methyltyrosine side chain. PenM also converts its first product methoxydehydrocyclopeptin to 4'-methoxycyclopenin. The following conversion of 4'methoxycyclopenin into 4'-methoxyviridicatin is catalyzed by the cyclopenase penL. 4'-methoxyviridicatin is the precursor of quinolone natural products, and is further converted to quinolinone B. The prenyltransferase penI then catalyzes the canonical Friedel-Crafts alkylation of quinolinone B with dimethylallyl cation to yield dimethylallyl quinolone, which is subjected to FAD-dependent dehydrogenation by the FAD-linked oxidoreductase penH to yield conjugated aryl diene. The delta(3') double bond then serves as the site of the second alkylation with DMAPP catalyzed by the prenyltransferase penG to yield a carbenium ion intermediate, which can be attacked by H(2)O to yield a styrenyl quinolone containing a C3'-hydroxyprenyl chain, or undergo cyclization to yield yaequinolones J1 and J2. The conversion of the styrenyl quinolone into the tetrahydrofuran-containing yaequinolone C is performed by the FAD-dependent monooxygenase penE and involves epoxidation of the terminal C7'-C8' olefin, followed by epoxide ring opening initiated by the C3' hydroxyl group. The predicted cysteine hydrolase penJ acts as an epoxide hydrolase that enhances the rate of the 5-exo-tet cyclization step, increasing the yield of yaequinolone C. PenF catalyzes the cationic rearrangement of the epoxide formed by penE (before ring opening to produce yaequinolone C) into yaequinolone D. Finally, the short-chain dehydrogenase/reductase (SDR)-like reductase penD, catalyzes both the dehydration of yaequinolone D and the reduction of the resulting oxonium to yield penigequinolone. In Penicillium thymicola, this protein is Prenyltransferase penI.